A 331-amino-acid polypeptide reads, in one-letter code: 2-oxoglutarate-dependent dioxygenase (331 aa).

Residues 186–292 enclose the Fe2OG dioxygenase domain; the sequence is PACPLRLLHY…RYSVVFFMDG (107 aa). Fe cation contacts are provided by histidine 214, aspartate 216, and histidine 272. Arginine 283 contacts 2-oxoglutarate.

It belongs to the iron/ascorbate-dependent oxidoreductase family. Fe(2+) serves as cofactor.

The protein operates within mycotoxin biosynthesis. Functionally, 2-oxoglutarate-dependent dioxygenase; part of the gene cluster that mediates the biosynthesis of the selective antifungal agent ascochitine, an o-quinone methide that plays a possible protective role against other microbial competitors in nature and is considered to be important for pathogenicity of legume-associated Didymella species. The pathway probably begins with the synthesis of a keto-aldehyde intermediate by the ascochitine non-reducing polyketide synthase pksAC from successive condensations of 4 malonyl-CoA units, presumably with a simple acetyl-CoA starter unit. Release of the keto-aldehyde intermediate is consistent with the presence of the C-terminal reductive release domain. The HR-PKS (orf7) probably makes a diketide starter unit which is passed to the non-reducing polyketide synthase pksAC for further extension, producing ascochital and ascochitine. The aldehyde dehydrogenase (orf1), the 2-oxoglutarate-dependent dioxygenase (orf3) and the dehydrogenase (orf9) are probably involved in subsequent oxidations of methyl groups to the carboxylic acid of the heterocyclic ring. The ascochitine gene cluster also includes a gene encoding a short peptide with a cupin domain (orf2) that is often found in secondary metabolite gene clusters and which function has still to be determined. The chain is 2-oxoglutarate-dependent dioxygenase from Didymella fabae (Leaf and pod spot disease fungus).